We begin with the raw amino-acid sequence, 45 residues long: Cytochrome b559 subunit beta (45 aa).

An N-acetylthreonine modification is found at T2. Residues 2 to 17 lie on the Cytoplasmic side of the membrane; the sequence is TSNTPNQEPVSYPIFT. Residues 18–42 form a helical membrane-spanning segment; it reads VRWVAVHTLAVPTIFFLGAIAAMQF. A heme-binding site is contributed by H24. The Lumenal portion of the chain corresponds to 43-45; sequence IQR.

As to quaternary structure, heterodimer of an alpha subunit and a beta subunit. PSII is composed of 1 copy each of membrane proteins PsbA, PsbB, PsbC, PsbD, PsbE, PsbF, PsbH, PsbI, PsbJ, PsbK, PsbL, PsbM, PsbT, PsbX, PsbY, PsbZ, Psb30/Ycf12, peripheral proteins PsbO, CyanoQ (PsbQ), PsbU, PsbV and a large number of cofactors. It forms dimeric complexes. Part of a photosystem II (PSII) assembly intermediate complex PSII-I; crystallized from a strain deleted of psbJ, it forms monomeric PSII before addition of the oxygen evolving complex. PSII-I includes 3 assembly factors not found in mature PSII (Psb27, Psb28 and Psb34). Heme b is required as a cofactor.

It is found in the cellular thylakoid membrane. In terms of biological role, this b-type cytochrome is tightly associated with the reaction center of photosystem II (PSII). PSII is a light-driven water:plastoquinone oxidoreductase that uses light energy to abstract electrons from H(2)O, generating O(2) and a proton gradient subsequently used for ATP formation. It consists of a core antenna complex that captures photons, and an electron transfer chain that converts photonic excitation into a charge separation. The sequence is that of Cytochrome b559 subunit beta from Thermosynechococcus vestitus (strain NIES-2133 / IAM M-273 / BP-1).